Consider the following 322-residue polypeptide: Sideroflexin-2 (322 aa).

Methionine 1 bears the N-acetylmethionine mark. The next 5 helical transmembrane spans lie at 99–119, 147–167, 174–194, 223–243, and 266–286; these read GMLI…VIFW, ALSY…MNMW, LVGR…NIPM, VGIA…MILL, and LQVL…CGLF.

This sequence belongs to the sideroflexin family. As to expression, expressed in brain, heart, kidney, spleen, thymus, liver, stomach and skin.

It is found in the mitochondrion inner membrane. The protein resides in the mitochondrion outer membrane. It catalyses the reaction L-serine(in) = L-serine(out). In terms of biological role, mitochondrial amino-acid transporter that mediates transport of serine into mitochondria. Involved in mitochondrial iron homeostasis by regulating heme biosynthesis. The polypeptide is Sideroflexin-2 (Mus musculus (Mouse)).